The primary structure comprises 561 residues: Magnesium-chelatase 60 kDa subunit (561 aa).

Disordered stretches follow at residues 234-268 (PLQE…DPLD) and 298-324 (RAAS…SRKG). The segment covering 237 to 249 (EAPPPPPPPPEPP) has biased composition (pro residues). A compositionally biased stretch (acidic residues) spans 250 to 265 (EPNEGENQQDEQDQID). Positions 314–323 (RRGRPLPSRK) are enriched in basic residues. The region spanning 379–559 (VLIFAVDASG…KMADVLGAAL (181 aa)) is the VWFA domain.

The protein belongs to the Mg-chelatase subunits D/I family.

It carries out the reaction protoporphyrin IX + Mg(2+) + ATP + H2O = Mg-protoporphyrin IX + ADP + phosphate + 3 H(+). It functions in the pathway porphyrin-containing compound metabolism; bacteriochlorophyll biosynthesis. Its function is as follows. Involved in bacteriochlorophyll biosynthesis; introduces a magnesium ion into protoporphyrin IX to yield Mg-protoporphyrin IX. This is Magnesium-chelatase 60 kDa subunit (bchD) from Rhodobacter capsulatus (strain ATCC BAA-309 / NBRC 16581 / SB1003).